The primary structure comprises 687 residues: MEEIVGLREGSPRKPVPLQELWRPCPRIRRNIQGSLEWLKERLFRVGEDWYFLVALGVLMALISYAMNFAIGRVVRAHKWLYREIGDGHLLRYLSWTVYPVALLSFSSGFSQSITPSSGGSGIPEVKTILTGVILEDYLDIKNFGAKVVGLSCTLATGSTIFLGKLGPFVHLSVMIAAYLGRVRTKTVGEPENKTKEMELLAAGAAVGVATVFAAPISGVLFSIEVMSSHFSVWDYWRGFFAATCGAFMFHLLAVFNSEQETITSIYKTSFPVDIPFDLPEIFFFVALGAICGILSCGYNYCQRTSLFFLKSNGFTSKLLATSKPLYSALAAVVLASITYPPGVGRFMASRLSMSEYLETLFDNNSWALMTKNSSPPWSAEPDPQNLWLEWCHPQMTVFGTLVFFLVMKFWMLILATTIPIPAGYFLPIFVYGAAIGRLFGEVLSLAFPEGIVAGGKVSPIMPGAYALAGAAAFSGAVTHTLSTALLAFEVSGQIVHALPVLMAVLAANAICQSYQPSFYDGTIIVKKLPYLPWIRGRKIGSHLVTVGHFMNCTLTTLAKDMPLEEVIKVVISTDVTQYPLVETTESQVLVGIVKRTHLVQSLHTDSASWAPGQQPCLQDILANGCPTQPVTLQLSTETSLHETHNLFELLNLQLLFVTSRGRAVGSVSWVELKKAISTLTNPPAPK.

Over 1-50 the chain is Cytoplasmic; that stretch reads MEEIVGLREGSPRKPVPLQELWRPCPRIRRNIQGSLEWLKERLFRVGEDW. 2 helical membrane passes run 51–82 and 91–111; these read YFLVALGVLMALISYAMNFAIGRVVRAHKWLY and LRYLSWTVYPVALLSFSSGFS. Positions 116–127 form an intramembrane region, helical; that stretch reads PSSGGSGIPEVK. Ser121 contributes to the chloride binding site. The next 2 membrane-spanning stretches (helical) occupy residues 141 to 160 and 161 to 180; these read IKNFGAKVVGLSCTLATGST and IFLGKLGPFVHLSVMIAAYL. Residue Asn193 is glycosylated (N-linked (GlcNAc...) asparagine). Positions 203 to 224 form an intramembrane region, helical; it reads AGAAVGVATVFAAPISGVLFSI. Residues 236–255 traverse the membrane as a helical segment; sequence YWRGFFAATCGAFMFHLLAV. Residues Glu259, Glu261, Asp278, and Glu281 each contribute to the Ca(2+) site. Transmembrane regions (helical) follow at residues 282 to 310 and 325 to 342; these read IFFFVALGAICGILSCGYNYCQRTSLFFL and PLYSALAAVVLASITYPP. Residues 349–360 constitute an intramembrane region (helical); it reads ASRLSMSEYLET. 2 helical membrane-spanning segments follow: residues 400 to 420 and 421 to 440; these read GTLVFFLVMKFWMLILATTIP and IPAGYFLPIFVYGAAIGRLF. Phe426 provides a ligand contact to chloride. An intramembrane region (helical) is located at residues 464 to 496; the sequence is GAYALAGAAAFSGAVTHTLSTALLAFEVSGQIV. Residues 500–520 traverse the membrane as a helical segment; that stretch reads PVLMAVLAANAICQSYQPSFY. At 521-687 the chain is on the cytoplasmic side; that stretch reads DGTIIVKKLP…STLTNPPAPK (167 aa). 2 consecutive CBS domains span residues 551-609 and 626-687; these read MNCT…DSAS and CPTQ…PAPK.

The protein belongs to the chloride channel (TC 2.A.49) family. CLCNKB subfamily. As to quaternary structure, homodimer. Interacts with BSND. N-glycosylated. In terms of tissue distribution, expressed predominantly in the kidney. Expressed in all segments of the nephron examined, including the S2 segment and the glomerulus.

The protein localises to the basolateral cell membrane. The catalysed reaction is chloride(in) = chloride(out). The enzyme catalyses iodide(out) = iodide(in). It catalyses the reaction nitrate(in) = nitrate(out). It carries out the reaction bromide(in) = bromide(out). Its function is as follows. Anion-selective channel permeable to small monovalent anions with ion selectivity for chloride &gt; bromide &gt; nitrate &gt; iodide. Forms a homodimeric channel where each subunit has its own ion conduction pathway. May conduct double-barreled currents controlled by two types of gates, two fast gates that control each subunit independently and a slow common gate that opens and shuts off both subunits simultaneously. Assembles with the regulatory subunit BSND/Barttin for sorting at the basolateral plasma membrane domain and functional switch to the ion conducting state. CLCNKB:BSND channels display mostly a linear current-voltage relationship controlled by common gate. Mediates chloride conductance along nephron segments, namely the thick ascending limb of Henle's loop, convoluted tubule and the collecting duct, contributing to the maintenance of systemic acid-base and electrolyte homeostasis. Conducts chloride currents in the stria vascularis of the inner ear to establish the endocochlear potential necessary for normal hearing. This chain is Chloride channel protein ClC-Kb, found in Rattus norvegicus (Rat).